Reading from the N-terminus, the 705-residue chain is Calpain-1 catalytic subunit (705 aa).

Residues 48 to 347 (LFRDPQFPAG…FSRLEICNLT (300 aa)) form the Calpain catalytic domain. Residues Cys108, His265, and Asn289 contribute to the active site. The tract at residues 348–517 (PDALTKDELS…KQSDTAELDE (170 aa)) is domain III. A linker region spans residues 518–533 (EISADLADEEEITEDD). An EF-hand 1 domain is found at 530-565 (TEDDIEDGFKNMFQQLAGEDMEISVFELKTILNRVI). Positions 534–704 (IEDGFKNMFQ…LAEWLLLTMC (171 aa)) are domain IV. 13 residues coordinate Ca(2+): Asp549, Glu551, Glu556, Asp589, Asp591, Ser593, Arg595, Glu600, Asp619, Asp621, Ser623, Thr625, and Glu630. 2 EF-hand domains span residues 606–641 (NKIR…AGFK) and 671–705 (VKLE…TMCG).

Belongs to the peptidase C2 family. As to quaternary structure, heterodimer of large (catalytic) and a small (regulatory) subunit. Ca(2+) serves as cofactor. Post-translationally, the N-terminus is blocked. In terms of tissue distribution, ubiquitously expressed.

It localises to the cytoplasm. Its subcellular location is the cell membrane. The enzyme catalyses Broad endopeptidase specificity.. With respect to regulation, activated by micromolar concentrations of calcium and inhibited by calpastatin. Its function is as follows. Calcium-regulated non-lysosomal thiol-protease which catalyze limited proteolysis of substrates involved in cytoskeletal remodeling and signal transduction. This chain is Calpain-1 catalytic subunit, found in Gallus gallus (Chicken).